Here is a 509-residue protein sequence, read N- to C-terminus: Maturase K (509 aa).

It belongs to the intron maturase 2 family. MatK subfamily.

The protein resides in the plastid. It is found in the chloroplast. Usually encoded in the trnK tRNA gene intron. Probably assists in splicing its own and other chloroplast group II introns. The sequence is that of Maturase K from Hottonia palustris (Water-violet).